The following is a 272-amino-acid chain: Pyridoxal phosphate phosphatase YbhA (272 aa).

The active-site Nucleophile is the Asp9. Asp9 serves as a coordination point for Mg(2+). Position 10 (Leu10) interacts with phosphate. Asp11 is a Mg(2+) binding site. Phosphate-binding positions include 43 to 44 (TG) and Lys200. Asp223 provides a ligand contact to Mg(2+). Asn226 provides a ligand contact to phosphate.

Belongs to the HAD-like hydrolase superfamily. CbbY/CbbZ/Gph/YieH family. The cofactor is Mg(2+). Mn(2+) serves as cofactor. Requires Co(2+) as cofactor. It depends on Zn(2+) as a cofactor.

It carries out the reaction pyridoxal 5'-phosphate + H2O = pyridoxal + phosphate. Its function is as follows. Catalyzes the dephosphorylation of pyridoxal-phosphate (PLP). Can also hydrolyze erythrose-4-phosphate (Ery4P) and fructose-1,6-bis-phosphate (Fru1,6bisP). The polypeptide is Pyridoxal phosphate phosphatase YbhA (ybhA) (Escherichia coli (strain K12)).